The primary structure comprises 431 residues: MPQLTRSAELFEKAKQFIPGGVNSPVRAFKSVGGTPIYMAKGQGAYMTDVDGNTYLDYVGSWGPFILGSMHPRITAALEHTLTKIGTSFGTPIEMEIEIAELLCQIVPSIEMVRMVNSGTEATMSAVRLARGYTSRDKIIKFEGCYHGHGDSFLIKAGSGALTLGAPDSPGVTKGTANDTLNAKYNDIESVRLLVNENKGNIAAIIIEPVAGNTGVIPAKPGFLQALRDLCTEEGIVLIFDEVMCGFRVALGGAQERYGVTPDLTTMGKIIGGGLPVGAFGGKREIMERIAPLGDVYQAGTLSGNPLALTAGLETLKILRDENPYPELERKAAFLEEGFRNNMNKLGLNYVQNRVGSMACLFFTETPVTDYDTAVTADLKKYGTYYHAMLDQGIYLAPSQFEAMFTSAVMTDEDLEKTVKANYVALQATQK.

Lys269 carries the N6-(pyridoxal phosphate)lysine modification.

The protein belongs to the class-III pyridoxal-phosphate-dependent aminotransferase family. HemL subfamily. Homodimer. Requires pyridoxal 5'-phosphate as cofactor.

The protein resides in the cytoplasm. It carries out the reaction (S)-4-amino-5-oxopentanoate = 5-aminolevulinate. It functions in the pathway porphyrin-containing compound metabolism; protoporphyrin-IX biosynthesis; 5-aminolevulinate from L-glutamyl-tRNA(Glu): step 2/2. It participates in porphyrin-containing compound metabolism; chlorophyll biosynthesis. This Prosthecochloris aestuarii (strain DSM 271 / SK 413) protein is Glutamate-1-semialdehyde 2,1-aminomutase.